The primary structure comprises 426 residues: 3-phosphoshikimate 1-carboxyvinyltransferase (426 aa).

Lys22, Ser23, and Arg27 together coordinate 3-phosphoshikimate. Lys22 provides a ligand contact to phosphoenolpyruvate. 2 residues coordinate phosphoenolpyruvate: Gly96 and Arg124. The 3-phosphoshikimate site is built by Ser170, Ser171, Gln172, Ser198, Asp314, Asn337, and Lys341. Phosphoenolpyruvate is bound at residue Gln172. The active-site Proton acceptor is Asp314. Positions 345, 387, and 412 each coordinate phosphoenolpyruvate.

It belongs to the EPSP synthase family. Monomer.

It localises to the cytoplasm. It carries out the reaction 3-phosphoshikimate + phosphoenolpyruvate = 5-O-(1-carboxyvinyl)-3-phosphoshikimate + phosphate. Its pathway is metabolic intermediate biosynthesis; chorismate biosynthesis; chorismate from D-erythrose 4-phosphate and phosphoenolpyruvate: step 6/7. Catalyzes the transfer of the enolpyruvyl moiety of phosphoenolpyruvate (PEP) to the 5-hydroxyl of shikimate-3-phosphate (S3P) to produce enolpyruvyl shikimate-3-phosphate and inorganic phosphate. This Shewanella pealeana (strain ATCC 700345 / ANG-SQ1) protein is 3-phosphoshikimate 1-carboxyvinyltransferase.